Here is a 449-residue protein sequence, read N- to C-terminus: Bifunctional protein GlmU (449 aa).

Residues 1 to 230 (MASSKLAVIV…EAELLGVNAR (230 aa)) are pyrophosphorylase. UDP-N-acetyl-alpha-D-glucosamine contacts are provided by residues 11–14 (LAAG), Lys25, Gln74, 79–80 (GT), 102–104 (YGD), Gly142, Glu156, Asn171, and Asn228. Asp104 is a Mg(2+) binding site. Asn228 provides a ligand contact to Mg(2+). Residues 231–251 (SELAVAEALVQARLREAAMDN) are linker. The tract at residues 252-449 (GATLIDPATV…QQAAKKAKKD (198 aa)) is N-acetyltransferase. UDP-N-acetyl-alpha-D-glucosamine-binding residues include Arg317 and Lys335. Catalysis depends on His347, which acts as the Proton acceptor. Residues Tyr350 and Asn361 each coordinate UDP-N-acetyl-alpha-D-glucosamine. Acetyl-CoA-binding positions include Ala364, 370 to 371 (NY), Ser389, Ala407, and Arg424.

It in the N-terminal section; belongs to the N-acetylglucosamine-1-phosphate uridyltransferase family. The protein in the C-terminal section; belongs to the transferase hexapeptide repeat family. In terms of assembly, homotrimer. Mg(2+) serves as cofactor.

The protein resides in the cytoplasm. It catalyses the reaction alpha-D-glucosamine 1-phosphate + acetyl-CoA = N-acetyl-alpha-D-glucosamine 1-phosphate + CoA + H(+). It carries out the reaction N-acetyl-alpha-D-glucosamine 1-phosphate + UTP + H(+) = UDP-N-acetyl-alpha-D-glucosamine + diphosphate. Its pathway is nucleotide-sugar biosynthesis; UDP-N-acetyl-alpha-D-glucosamine biosynthesis; N-acetyl-alpha-D-glucosamine 1-phosphate from alpha-D-glucosamine 6-phosphate (route II): step 2/2. The protein operates within nucleotide-sugar biosynthesis; UDP-N-acetyl-alpha-D-glucosamine biosynthesis; UDP-N-acetyl-alpha-D-glucosamine from N-acetyl-alpha-D-glucosamine 1-phosphate: step 1/1. It participates in bacterial outer membrane biogenesis; LPS lipid A biosynthesis. Functionally, catalyzes the last two sequential reactions in the de novo biosynthetic pathway for UDP-N-acetylglucosamine (UDP-GlcNAc). The C-terminal domain catalyzes the transfer of acetyl group from acetyl coenzyme A to glucosamine-1-phosphate (GlcN-1-P) to produce N-acetylglucosamine-1-phosphate (GlcNAc-1-P), which is converted into UDP-GlcNAc by the transfer of uridine 5-monophosphate (from uridine 5-triphosphate), a reaction catalyzed by the N-terminal domain. This chain is Bifunctional protein GlmU, found in Paramagnetospirillum magneticum (strain ATCC 700264 / AMB-1) (Magnetospirillum magneticum).